The following is a 117-amino-acid chain: Small ribosomal subunit protein bS6 (117 aa).

Residues 97-117 (TEEPSAILTKKDDRRGRRERN) are disordered.

Belongs to the bacterial ribosomal protein bS6 family.

Binds together with bS18 to 16S ribosomal RNA. The polypeptide is Small ribosomal subunit protein bS6 (Maricaulis maris (strain MCS10) (Caulobacter maris)).